A 164-amino-acid chain; its full sequence is Dynein regulatory complex protein 8 (164 aa).

EF-hand domains follow at residues 16 to 51 (ELHK…LGCC) and 94 to 129 (AAED…EGEP).

Belongs to the DRC8 family. Component of the nexin-dynein regulatory complex (N-DRC).

It is found in the cytoplasm. The protein resides in the cytoskeleton. It localises to the flagellum axoneme. Component of the nexin-dynein regulatory complex (N-DRC), a key regulator of ciliary/flagellar motility which maintains the alignment and integrity of the distal axoneme and regulates microtubule sliding in motile axonemes. In Mus musculus (Mouse), this protein is Dynein regulatory complex protein 8 (Efcab2).